Reading from the N-terminus, the 553-residue chain is Undecaprenyl phosphate-alpha-4-amino-4-deoxy-L-arabinose arabinosyl transferase (553 aa).

A run of 12 helical transmembrane segments spans residues 8 to 28, 81 to 101, 113 to 133, 136 to 156, 176 to 196, 204 to 224, 255 to 275, 289 to 309, 313 to 333, 351 to 371, 384 to 404, and 412 to 432; these read LLFSLFYALYYLIPLELRALW, FAVRIGSVFSITLSALLVYWL, LLSAVVFLTCLLVYGVGSYAV, PMVTLWLVAAMCSFWLAAQSA, LMTKGFLALAVPVVAIVPWMI, LLLFGPLALVSAALITAPWAI, APFWYYLPMLLAGALPWVGLL, NSGSLYLLCWTVMPLLFFSLA, LPTYILPCFAPLAILLAHHGI, VAFGVIAALAVILVLAPWGLV, VLLGASAFLFWAAVGLACLVA, and AALCPLGLALLAGAVIPDKVI.

The protein belongs to the glycosyltransferase 83 family.

Its subcellular location is the cell inner membrane. The enzyme catalyses 4-amino-4-deoxy-alpha-L-arabinopyranosyl di-trans,octa-cis-undecaprenyl phosphate + lipid IVA = lipid IIA + di-trans,octa-cis-undecaprenyl phosphate.. The protein operates within lipopolysaccharide metabolism; 4-amino-4-deoxy-beta-L-arabinose-lipid A biosynthesis. Functionally, catalyzes the transfer of the L-Ara4N moiety of the glycolipid undecaprenyl phosphate-alpha-L-Ara4N to lipid A. The modified arabinose is attached to lipid A and is required for resistance to polymyxin and cationic antimicrobial peptides. This Erwinia tasmaniensis (strain DSM 17950 / CFBP 7177 / CIP 109463 / NCPPB 4357 / Et1/99) protein is Undecaprenyl phosphate-alpha-4-amino-4-deoxy-L-arabinose arabinosyl transferase.